Consider the following 700-residue polypeptide: uncharacterized protein (700 aa).

9 helical membrane passes run 24–44 (VLCLPVAVGLMLGELRFGLLF), 67–87 (LIIGASLFATCSLLTQLLLAK), 89–109 (VPLPFLLTGLTLVLGVTAELG), 115–135 (LLPASLLAAIFTLSLAGYMPV), 139–159 (LLIYALGTLWYGLFNWFWFWI), 383–403 (LMGTALHLPKSYWILMTVLLV), 420–440 (VGTVVGLIIAGVALHFKIPEG), 461–481 (YGWATVGFTITAVYTLQLLWL), and 491–511 (LIDTIIGCLIAFGGTVWLWPQ).

The protein belongs to the YccS/YhfK family.

It localises to the cell membrane. This is an uncharacterized protein from Escherichia coli (strain K12).